Here is an 896-residue protein sequence, read N- to C-terminus: Microsomal triglyceride transfer protein large subunit (896 aa).

An N-terminal signal peptide occupies residues 1 to 21; sequence MILLAVLFLCFFSSYSASVKG. In terms of domain architecture, Vitellogenin spans 28–659; sequence LNNERLYKLT…IFQYIGKAEL (632 aa). A disulfide bond links cysteine 174 and cysteine 194.

Heterodimer; heterodimerizes with the protein disulfide isomerase (P4HB/PDI). Interacts with APOB. Interacts with PRAP1.

It is found in the endoplasmic reticulum. The protein resides in the golgi apparatus. The enzyme catalyses a 1,2-diacyl-sn-glycero-3-phosphocholine(in) = a 1,2-diacyl-sn-glycero-3-phosphocholine(out). It catalyses the reaction a 1,2-diacyl-sn-glycero-3-phosphoethanolamine(in) = a 1,2-diacyl-sn-glycero-3-phosphoethanolamine(out). It carries out the reaction a cholesterol ester(in) = a cholesterol ester(out). The catalysed reaction is a triacyl-sn-glycerol(in) = a triacyl-sn-glycerol(out). In terms of biological role, catalyzes the transport of triglyceride, cholesteryl ester, and phospholipid between phospholipid surfaces. Required for the assembly and secretion of plasma lipoproteins that contain apolipoprotein B. May be involved in regulating cholesteryl ester biosynthesis in cells that produce lipoproteins. This Rattus norvegicus (Rat) protein is Microsomal triglyceride transfer protein large subunit (Mttp).